A 563-amino-acid chain; its full sequence is (R)-mandelonitrile lyase 1 (563 aa).

A signal peptide spans 1 to 27 (MEKSTMSAILLVLHLFVLLLQYSEVHS). FAD-binding positions include 63-64 (TS), 82-83 (ER), Val-129, Thr-133, and 137-140 (NAGV). Asn-145 and Asn-162 each carry an N-linked (GlcNAc...) asparagine glycan. Val-244 provides a ligand contact to FAD. Residue Cys-355 coordinates substrate. The N-linked (GlcNAc...) asparagine glycan is linked to Asn-379. Cysteines 426 and 477 form a disulfide. Tyr-484 contacts substrate. Residues 485–486 (WH) and Gly-514 each bind FAD. Residue His-486 is the Proton donor of the active site. Catalysis depends on His-524, which acts as the Proton acceptor. 525–526 (PQ) is an FAD binding site.

It belongs to the GMC oxidoreductase family. Monomer. The cofactor is FAD. In terms of processing, glycosylated. In terms of tissue distribution, seeds. Localized within cotyledonary parenchyma cells.

It localises to the vacuole. The protein resides in the aleurone grain. The enzyme catalyses (R)-mandelonitrile = benzaldehyde + hydrogen cyanide. Its function is as follows. Involved in cyanogenesis, the release of HCN from injured tissues. Catalyzes the stereospecific addition of HCN to a variety of aldehydes in vitro. It is a major seed constituent, and could have the additional role of a storage form for reduced nitrogen. In Prunus serotina (Black cherry), this protein is (R)-mandelonitrile lyase 1 (MDL1).